We begin with the raw amino-acid sequence, 134 residues long: Secreted RxLR effector protein 1 (134 aa).

The N-terminal stretch at 1–22 is a signal peptide; it reads MFCRSPLVAVILLVLATHIVLA. The tract at residues 32-60 is disordered; it reads SETVPSDSSQTTRKSTRRTTSVDNKRRLR. A compositionally biased stretch (low complexity) spans 37–52; that stretch reads SDSSQTTRKSTRRTTS. Residues 57–79 carry the RxLR-dEER motif; the sequence is RRLRQQIMGKDGPVVNDVHAEER.

Belongs to the RxLR effector family.

The protein localises to the secreted. It is found in the host nucleus. Effector that acts as a broad suppressor of cell death to interrupt plant immunity. Inhibits cell death induced by cell death-inducing proteins, including the PAMP elicitor INF1 from P.infestans. The polypeptide is Secreted RxLR effector protein 1 (Plasmopara viticola (Downy mildew of grapevine)).